A 410-amino-acid chain; its full sequence is Chaperone protein dnaJ 15 (410 aa).

The J domain maps to 17–82 (DPYEVLCVSK…EKRRHYDNAG (66 aa)). A coiled-coil region spans residues 284 to 344 (AKTYEDTTEK…TVDELLKQRD (61 aa)). The disordered stretch occupies residues 351–410 (SVVKTPSGNNLSNGSSSKAQGDESKGDGDSAGEEGGTENRDKSKRKWFNLNLKGSDKKLG). The span at 357–367 (SGNNLSNGSSS) shows a compositional bias: low complexity.

This sequence belongs to the DnaJ family. B/II subfamily. Expressed at high levels in root cap, root tip meristematic region and elongation zones, and at lower levels in mature part of roots (at protein level). Constitutively expressed in seedlings, etiolated or not, roots, rosette leaves, cauline leaves, stems, flowers, siliques and pollen.

It is found in the cytoplasm. Its subcellular location is the cytoskeleton. The protein localises to the endoplasmic reticulum membrane. The protein resides in the golgi apparatus membrane. Functionally, plays a continuous role in plant development probably in the structural organization of compartments. Seems to be involved in early gravitropic signal transduction within the gravity-perceiving cells (statocytes), where it influences pH changes and auxin distribution. Probably affects the localization and/or activity of auxin efflux carrier components (PIN proteins) or other proteins involved in lateral auxin transport. This Arabidopsis thaliana (Mouse-ear cress) protein is Chaperone protein dnaJ 15 (ATJ15).